The primary structure comprises 345 residues: MTNKTSLSYKDAGVDIDAGNALVDRIKGVVKKTRRPEVMGGLGGFGALCALPQKYREPVLVSGTDGVGTKLRLAMDLKRHDTIGIDLVAMCVNDLVVQGAEPLFFLDYYATGKLDVDTAASVITGIAEGCLQSGCSLVGGETAEMPGMYHGEDYDVAGFCVGVVEKSEIIDGSKVTDGDVLIALGSSGPHSNGYSLVRKILEVSKTDPETTELEGKPLADHLLAPTRIYVKNILELIENVDVHAIAHLTGGGFWENIPRVLPDNTQAVIDESSWQWPAVFNWLQTAGNVSQHEMYRTFNCGVGMLIALPASEADKAIALMTAKGENAWKIGIIKASDSDERVVIE.

The protein belongs to the AIR synthase family.

It is found in the cytoplasm. The enzyme catalyses 2-formamido-N(1)-(5-O-phospho-beta-D-ribosyl)acetamidine + ATP = 5-amino-1-(5-phospho-beta-D-ribosyl)imidazole + ADP + phosphate + H(+). It participates in purine metabolism; IMP biosynthesis via de novo pathway; 5-amino-1-(5-phospho-D-ribosyl)imidazole from N(2)-formyl-N(1)-(5-phospho-D-ribosyl)glycinamide: step 2/2. In Enterobacter sp. (strain 638), this protein is Phosphoribosylformylglycinamidine cyclo-ligase.